A 102-amino-acid chain; its full sequence is PE family immunomodulator PE5 (102 aa).

Residues leucine 3 to alanine 92 form the PE domain.

The protein belongs to the mycobacterial PE family.

The protein localises to the secreted. Its subcellular location is the cell envelope. The protein resides in the cell surface. In terms of biological role, important for the siderophore-mediated iron-acquisition function of ESX-3. May play a pivotal role in the evasion of host immune response by M.tuberculosis. Mediates production of IL-10 via activation of the p38 and ERK1/2 mitogen-activated protein kinase (MAPK) signaling pathways. The protein is PE family immunomodulator PE5 of Mycobacterium tuberculosis (strain ATCC 25618 / H37Rv).